We begin with the raw amino-acid sequence, 341 residues long: Anthranilate phosphoribosyltransferase (341 aa).

5-phospho-alpha-D-ribose 1-diphosphate-binding positions include glycine 83, serine 91, 93–96 (NTST), 111–115 (KHGNR), and serine 123. Glycine 83 provides a ligand contact to anthranilate. Mg(2+) is bound at residue serine 95. Asparagine 114 is an anthranilate binding site. Arginine 169 serves as a coordination point for anthranilate. The Mg(2+) site is built by aspartate 228 and glutamate 229.

The protein belongs to the anthranilate phosphoribosyltransferase family. Homodimer. Mg(2+) is required as a cofactor.

It catalyses the reaction N-(5-phospho-beta-D-ribosyl)anthranilate + diphosphate = 5-phospho-alpha-D-ribose 1-diphosphate + anthranilate. Its pathway is amino-acid biosynthesis; L-tryptophan biosynthesis; L-tryptophan from chorismate: step 2/5. In terms of biological role, catalyzes the transfer of the phosphoribosyl group of 5-phosphorylribose-1-pyrophosphate (PRPP) to anthranilate to yield N-(5'-phosphoribosyl)-anthranilate (PRA). This Hyphomonas neptunium (strain ATCC 15444) protein is Anthranilate phosphoribosyltransferase.